Here is a 297-residue protein sequence, read N- to C-terminus: Inactive beta selinene synthase (297 aa).

This sequence belongs to the terpene synthase family. As to quaternary structure, monomer.

It localises to the cytoplasm. Its function is as follows. Inactive selinene synthase. The polypeptide is Inactive beta selinene synthase (Zea mays (Maize)).